A 264-amino-acid polypeptide reads, in one-letter code: Thiazole synthase (264 aa).

The Schiff-base intermediate with DXP role is filled by K106. Residues G167, 193–194 (AG), and 215–216 (NS) each bind 1-deoxy-D-xylulose 5-phosphate.

This sequence belongs to the ThiG family. Homotetramer. Forms heterodimers with either ThiH or ThiS.

Its subcellular location is the cytoplasm. The catalysed reaction is [ThiS sulfur-carrier protein]-C-terminal-Gly-aminoethanethioate + 2-iminoacetate + 1-deoxy-D-xylulose 5-phosphate = [ThiS sulfur-carrier protein]-C-terminal Gly-Gly + 2-[(2R,5Z)-2-carboxy-4-methylthiazol-5(2H)-ylidene]ethyl phosphate + 2 H2O + H(+). The protein operates within cofactor biosynthesis; thiamine diphosphate biosynthesis. Functionally, catalyzes the rearrangement of 1-deoxy-D-xylulose 5-phosphate (DXP) to produce the thiazole phosphate moiety of thiamine. Sulfur is provided by the thiocarboxylate moiety of the carrier protein ThiS. In vitro, sulfur can be provided by H(2)S. This is Thiazole synthase from Prochlorococcus marinus (strain MIT 9312).